Consider the following 415-residue polypeptide: Multidrug resistance protein MdtA (415 aa).

An N-terminal signal peptide occupies residues 1–21 (MKGSYKSRWVIVIVVVIAAIA). Polar residues predominate over residues 31 to 47 (DSQSAAPGATKQAQQSP). 2 disordered regions span residues 31–56 (DSQS…GMRA) and 390–415 (VVET…GARS). The span at 399–415 (PEEKATSREYAKKGARS) shows a compositional bias: basic and acidic residues.

This sequence belongs to the membrane fusion protein (MFP) (TC 8.A.1) family. Part of a tripartite efflux system composed of MdtA, MdtB and MdtC.

The protein resides in the cell inner membrane. Its function is as follows. The MdtABC tripartite complex confers resistance against novobiocin and deoxycholate. In Escherichia coli O6:H1 (strain CFT073 / ATCC 700928 / UPEC), this protein is Multidrug resistance protein MdtA.